Reading from the N-terminus, the 460-residue chain is Cysteine--tRNA ligase (460 aa).

Cysteine 27 is a binding site for Zn(2+). Residues 29–39 (PTVYDLIHVGN) carry the 'HIGH' region motif. Residues cysteine 207, histidine 232, and glutamate 236 each contribute to the Zn(2+) site. The 'KMSKS' region motif lies at 264-268 (KMSKS). ATP is bound at residue lysine 267.

This sequence belongs to the class-I aminoacyl-tRNA synthetase family. Monomer. It depends on Zn(2+) as a cofactor.

The protein resides in the cytoplasm. It carries out the reaction tRNA(Cys) + L-cysteine + ATP = L-cysteinyl-tRNA(Cys) + AMP + diphosphate. The sequence is that of Cysteine--tRNA ligase from Thermotoga petrophila (strain ATCC BAA-488 / DSM 13995 / JCM 10881 / RKU-1).